The sequence spans 88 residues: Small ribosomal subunit protein uS15 (88 aa).

This sequence belongs to the universal ribosomal protein uS15 family. Part of the 30S ribosomal subunit. Forms a bridge to the 50S subunit in the 70S ribosome, contacting the 23S rRNA.

One of the primary rRNA binding proteins, it binds directly to 16S rRNA where it helps nucleate assembly of the platform of the 30S subunit by binding and bridging several RNA helices of the 16S rRNA. In terms of biological role, forms an intersubunit bridge (bridge B4) with the 23S rRNA of the 50S subunit in the ribosome. This is Small ribosomal subunit protein uS15 from Mycoplasma mobile (strain ATCC 43663 / 163K / NCTC 11711) (Mesomycoplasma mobile).